Reading from the N-terminus, the 347-residue chain is MRVADFHFDLPEALIARHPLPERRASRLLALDGPTGTLAHRQFADLLDYLRPGDLMVFNNTRVIPARLFGQKESGGKLEVLVERVLDQHRVLAHIRASKAPKPGTRILVEGGGSAEMLQRHDALFELAFAEPVLPLLERVGHMPLPPYIDRPDDAADRERYQTVYAQRAGAVAAPTAGLHFDEALLEAIRAKGVDTAFVTLHVGAGTFQPVRVERIEDHVMHREWLEVGQDVVDAVSVCRARGGRVVAVGTTSVRSLESAARDGELKPFSGDTDIFIYPGRPFHVVDALVTNFHLPESTLLMLVSAFAGYPETMAAYAAAVAQGYRFFSYGDAMFITRNPAPRGPED.

This sequence belongs to the QueA family. As to quaternary structure, monomer.

It localises to the cytoplasm. It carries out the reaction 7-aminomethyl-7-carbaguanosine(34) in tRNA + S-adenosyl-L-methionine = epoxyqueuosine(34) in tRNA + adenine + L-methionine + 2 H(+). Its pathway is tRNA modification; tRNA-queuosine biosynthesis. In terms of biological role, transfers and isomerizes the ribose moiety from AdoMet to the 7-aminomethyl group of 7-deazaguanine (preQ1-tRNA) to give epoxyqueuosine (oQ-tRNA). The protein is S-adenosylmethionine:tRNA ribosyltransferase-isomerase of Pseudomonas aeruginosa (strain ATCC 15692 / DSM 22644 / CIP 104116 / JCM 14847 / LMG 12228 / 1C / PRS 101 / PAO1).